Reading from the N-terminus, the 545-residue chain is Glucose-6-phosphate isomerase (545 aa).

The Proton donor role is filled by Glu345. Catalysis depends on residues His376 and Lys514.

This sequence belongs to the GPI family.

It is found in the cytoplasm. It catalyses the reaction alpha-D-glucose 6-phosphate = beta-D-fructose 6-phosphate. It functions in the pathway carbohydrate biosynthesis; gluconeogenesis. The protein operates within carbohydrate degradation; glycolysis; D-glyceraldehyde 3-phosphate and glycerone phosphate from D-glucose: step 2/4. Functionally, catalyzes the reversible isomerization of glucose-6-phosphate to fructose-6-phosphate. The protein is Glucose-6-phosphate isomerase of Leptothrix cholodnii (strain ATCC 51168 / LMG 8142 / SP-6) (Leptothrix discophora (strain SP-6)).